A 240-amino-acid polypeptide reads, in one-letter code: Putative glycyl-radical enzyme activating enzyme MJ1227 (240 aa).

One can recognise a Radical SAM core domain in the interval 14–232; the sequence is IDYPKKASAV…KKYIDNVVIR (219 aa). Residues Cys29, Cys33, and Cys36 each contribute to the [4Fe-4S] cluster site. Residues 35–37, Gly71, and 126–128 contribute to the S-adenosyl-L-methionine site; these read YCH and FDK.

This sequence belongs to the organic radical-activating enzymes family. Requires [4Fe-4S] cluster as cofactor.

It carries out the reaction glycyl-[protein] + reduced [flavodoxin] + S-adenosyl-L-methionine = glycin-2-yl radical-[protein] + semiquinone [flavodoxin] + 5'-deoxyadenosine + L-methionine + H(+). This is Putative glycyl-radical enzyme activating enzyme MJ1227 from Methanocaldococcus jannaschii (strain ATCC 43067 / DSM 2661 / JAL-1 / JCM 10045 / NBRC 100440) (Methanococcus jannaschii).